We begin with the raw amino-acid sequence, 277 residues long: Diaminopimelate epimerase (277 aa).

2 residues coordinate substrate: Asn11 and Asn62. Residue Cys71 is the Proton donor of the active site. Substrate is bound by residues 72–73 (GN), Asn160, Asn193, and 211–212 (ER). Cys220 acts as the Proton acceptor in catalysis. Position 221-222 (221-222 (GT)) interacts with substrate.

The protein belongs to the diaminopimelate epimerase family. In terms of assembly, homodimer.

It is found in the cytoplasm. The enzyme catalyses (2S,6S)-2,6-diaminopimelate = meso-2,6-diaminopimelate. It participates in amino-acid biosynthesis; L-lysine biosynthesis via DAP pathway; DL-2,6-diaminopimelate from LL-2,6-diaminopimelate: step 1/1. In terms of biological role, catalyzes the stereoinversion of LL-2,6-diaminopimelate (L,L-DAP) to meso-diaminopimelate (meso-DAP), a precursor of L-lysine. The sequence is that of Diaminopimelate epimerase from Methanococcus maripaludis (strain C6 / ATCC BAA-1332).